A 93-amino-acid chain; its full sequence is Small ribosomal subunit protein bS6 (93 aa).

Belongs to the bacterial ribosomal protein bS6 family.

In terms of biological role, binds together with bS18 to 16S ribosomal RNA. The polypeptide is Small ribosomal subunit protein bS6 (rpsF) (Treponema pallidum (strain Nichols)).